A 377-amino-acid chain; its full sequence is O-phospho-L-seryl-tRNA:Cys-tRNA synthase (377 aa).

Pyridoxal 5'-phosphate-binding positions include 83–84 (AR), Asn188, and 211–213 (SGH). Lys214 carries the N6-(pyridoxal phosphate)lysine modification.

It belongs to the SepCysS family. In terms of assembly, homodimer. Interacts with SepRS. It depends on pyridoxal 5'-phosphate as a cofactor.

It carries out the reaction O-phospho-L-seryl-tRNA(Cys) + hydrogen sulfide + H(+) = L-cysteinyl-tRNA(Cys) + phosphate. In terms of biological role, converts O-phospho-L-seryl-tRNA(Cys) (Sep-tRNA(Cys)) to L-cysteinyl-tRNA(Cys) (Cys-tRNA(Cys)). This is O-phospho-L-seryl-tRNA:Cys-tRNA synthase from Methanothermobacter thermautotrophicus (strain ATCC 29096 / DSM 1053 / JCM 10044 / NBRC 100330 / Delta H) (Methanobacterium thermoautotrophicum).